The sequence spans 414 residues: Esterase FrsA (414 aa).

The protein belongs to the FrsA family.

It catalyses the reaction a carboxylic ester + H2O = an alcohol + a carboxylate + H(+). In terms of biological role, catalyzes the hydrolysis of esters. The sequence is that of Esterase FrsA from Citrobacter koseri (strain ATCC BAA-895 / CDC 4225-83 / SGSC4696).